Here is a 371-residue protein sequence, read N- to C-terminus: Regulatory protein RapK (371 aa).

TPR repeat units follow at residues 7 to 42 (EVVATTLNDWYIAIKKQKVDESIKYYSEIKKLFDEM), 93 to 130 (EYNFYLFEAMYEAYNKNYDRAINLYGLAEKKLAEIPDE), 175 to 208 (ATSTMIAAANYADMKRFEEAEQYYLEAIDIAKET), 215 to 248 (AQLFHNLSIVYSDWNKPDKCIESLEKAIGNESWL), 254 to 290 (INSLFMMIKELFKIDEKMKAINFYNKAQERLILMENK), and 331 to 364 (DELSYIAAKRFESIGAFEEATSFFNAKIWAEQKM).

The protein belongs to the Rap family.

It is found in the cytoplasm. Its activity is regulated as follows. Inhibited by PhrK, which prevents RapK-ComA interaction. Its function is as follows. Involved in the regulation of genetic competence development. Inhibits the activity of ComA, a transcriptional factor that regulates the development of genetic competence. Likely affects the activity of additional regulators, in particular Spo0A. This is Regulatory protein RapK (rapK) from Bacillus subtilis (strain 168).